The primary structure comprises 282 residues: Major surface antigen 4 (282 aa).

The signal sequence occupies residues 1–29; that stretch reads MNYRELFTGGLSAATVCACSLLVSGAVVA.

Belongs to the surface antigen msp4 family.

This chain is Major surface antigen 4 (msp4), found in Anaplasma marginale.